We begin with the raw amino-acid sequence, 129 residues long: 3-oxo-4,17-pregnadiene-20-carboxyl-CoA hydratase beta subunit (129 aa).

The protein belongs to the thioester dehydratase family. Heterodimer composed of ChsH1 and ChsH2. Two heterodimers combine to form a heterotetramer. The complex interacts with Ltp2 via the DUF35 C-terminal region of ChsH2. The ChsH1-ChsH2-Ltp2 protein complex is composed of two protomers that form a heterohexameric structure through the Ltp2 dimerization interface.

The catalysed reaction is 3-oxochola-4,17-dien-22-oyl-CoA + H2O = 17-hydroxy-3-oxochol-4-en-22-oyl-CoA. It carries out the reaction (2E)-octenoyl-CoA + H2O = 3-hydroxyoctanoyl-CoA. The enzyme catalyses (2E)-decenoyl-CoA + H2O = 3-hydroxydecanoyl-CoA. It functions in the pathway steroid metabolism; cholesterol degradation. Its activity is regulated as follows. In the absence of the Ltp2 aldolase, ChsH1/ChsH2 can hydrate only about 30% of the 3-OPDC-CoA substrate. Complete turnover requires the presence of Ltp2. Involved in cholesterol side chain degradation. Catalyzes the hydration of 3-oxo-4,17-pregnadiene-20-carboxyl-CoA (3-OPDC-CoA) to form 17-hydroxy-3-oxo-4-pregnene-20-carboxyl-CoA (17-HOPC-CoA), in the modified beta-oxidation pathway for cholesterol side chain degradation. Can also use octenoyl-CoA and decenoyl-CoA, with lower efficiency. This Mycobacterium tuberculosis (strain ATCC 25618 / H37Rv) protein is 3-oxo-4,17-pregnadiene-20-carboxyl-CoA hydratase beta subunit.